Reading from the N-terminus, the 430-residue chain is Phosphoglucosamine mutase (430 aa).

The active-site Phosphoserine intermediate is the serine 93. Serine 93, aspartate 227, aspartate 229, and aspartate 231 together coordinate Mg(2+). Residue serine 93 is modified to Phosphoserine.

It belongs to the phosphohexose mutase family. Requires Mg(2+) as cofactor. Activated by phosphorylation.

The enzyme catalyses alpha-D-glucosamine 1-phosphate = D-glucosamine 6-phosphate. In terms of biological role, catalyzes the conversion of glucosamine-6-phosphate to glucosamine-1-phosphate. The protein is Phosphoglucosamine mutase of Thermosipho africanus (strain TCF52B).